The sequence spans 582 residues: Cryptochrome DASH, chloroplastic/mitochondrial (582 aa).

The N-terminal 49 residues, 1–49, are a transit peptide targeting the chloroplast and mitochondrion; sequence MLHFLSSSSPLNPQFLLLPRQSARLRVLLSIPVSAMSSSSSSSSRGALA. A Photolyase/cryptochrome alpha/beta domain is found at 84 to 234; sequence GVAIVWFRND…KLQLIWGATL (151 aa). The disordered stretch occupies residues 560-582; it reads GHQKRDQQFNRQRRPGHMYRRQK. Residues 570–582 show a composition bias toward basic residues; the sequence is RQRRPGHMYRRQK.

It belongs to the DNA photolyase class-1 family. The cofactor is FAD. It depends on (6R)-5,10-methylene-5,6,7,8-tetrahydrofolate as a cofactor.

It localises to the plastid. It is found in the chloroplast. The protein localises to the mitochondrion. Functionally, may have a photoreceptor function. Binds ss- and ds-DNA in a sequence non-specific manner, lacks photolyase activity. The protein is Cryptochrome DASH, chloroplastic/mitochondrial (CRYD) of Oryza sativa subsp. japonica (Rice).